We begin with the raw amino-acid sequence, 178 residues long: Caveolin-1 (178 aa).

Serine 2 is subject to N-acetylserine. A Phosphoserine modification is found at serine 2. Residues 2–94 (SGGKYVDSEG…WKASFTTFTV (93 aa)) are required for homooligomerization. Residues 2–104 (SGGKYVDSEG…TKYWFYRLLS (103 aa)) are Cytoplasmic-facing. Position 5 is an N6-acetyllysine; alternate (lysine 5). A Glycyl lysine isopeptide (Lys-Gly) (interchain with G-Cter in ubiquitin); alternate cross-link involves residue lysine 5. Tyrosine 6 is modified (phosphotyrosine). Serine 9 carries the post-translational modification Phosphoserine. Tyrosine 14 is subject to Phosphotyrosine; by ABL1. Residue tyrosine 25 is modified to Phosphotyrosine. Residues lysine 26 and lysine 30 each participate in a glycyl lysine isopeptide (Lys-Gly) (interchain with G-Cter in ubiquitin) cross-link. At serine 37 the chain carries Phosphoserine. Glycyl lysine isopeptide (Lys-Gly) (interchain with G-Cter in ubiquitin) cross-links involve residues lysine 39, lysine 47, and lysine 57. An interaction with CAVIN3 region spans residues 82 to 94 (DGIWKASFTTFTV). The segment at residues 105–125 (ALFGIPMALIWGIYFAILSFL) is an intramembrane region (helical). Over 126–178 (HIWAVVPCIKSFLIEIQCISRVYSIYVHTVCDPLFEAVGKIFSNVRINLQKEI) the chain is Cytoplasmic. An interacts with SPRY1, SPRY2, SPRY3 and SPRY4 region spans residues 131-142 (VPCIKSFLIEIQ). S-palmitoyl cysteine attachment occurs at residues cysteine 133, cysteine 143, and cysteine 156. The tract at residues 149–160 (SIYVHTVCDPLF) is interacts with SPRY1, SPRY2, and SPRY4. The interval 167-178 (FSNVRINLQKEI) is interacts with SPRY1, SPRY2, SPRY3 and SPRY4.

This sequence belongs to the caveolin family. As to quaternary structure, homooligomer. Interacts (via the N-terminus) with DPP4; the interaction is direct. Forms a stable heterooligomeric complex with CAV2 that targets to lipid rafts and drives caveolae formation. Interacts with PACSIN2; this interaction induces membrane tubulation. Interacts with BMX, BTK, CTNNB1, CDH1, GLIPR2, JUP, NOSTRIN, SNAP25 and STX1A. Interacts with SLC7A9. Interacts with TGFBR1. Interacts with CAVIN3 (via leucine-zipper domain) in a cholesterol-sensitive manner. Interacts with CAVIN1. Interacts with EHD2 in a cholesterol-dependent manner. Forms a ternary complex with UBXN6 and VCP; mediates CAV1 targeting to lysosomes for degradation. Interacts with ABCG1; this interaction regulates ABCG1-mediated cholesterol efflux. Interacts with NEU3; this interaction enhances NEU3 sialidase activity within caveola. Interacts (via C-terminus) with SPRY1, SPRY2 (via C-terminus), SPRY3, and SPRY4. Interacts with IGFBP5; this interaction allows trafficking of IGFBP5 from the plasma membrane to the nucleus. In terms of processing, phosphorylated at Tyr-14 by ABL1 in response to oxidative stress. Post-translationally, ubiquitinated. Undergo monoubiquitination and multi- and/or polyubiquitination. Monoubiquitination of N-terminal lysines promotes integration in a ternary complex with UBXN6 and VCP which promotes oligomeric CAV1 targeting to lysosomes for degradation. Ubiquitinated by ZNRF1; leading to degradation and modulation of the TLR4-mediated immune response.

It is found in the golgi apparatus membrane. It localises to the cell membrane. The protein resides in the membrane. The protein localises to the caveola. Its subcellular location is the membrane raft. May act as a scaffolding protein within caveolar membranes. Forms a stable heterooligomeric complex with CAV2 that targets to lipid rafts and drives caveolae formation. Mediates the recruitment of CAVIN proteins (CAVIN1/2/3/4) to the caveolae. Interacts directly with G-protein alpha subunits and can functionally regulate their activity. Involved in the costimulatory signal essential for T-cell receptor (TCR)-mediated T-cell activation. Its binding to DPP4 induces T-cell proliferation and NF-kappa-B activation in a T-cell receptor/CD3-dependent manner. Recruits CTNNB1 to caveolar membranes and may regulate CTNNB1-mediated signaling through the Wnt pathway. Negatively regulates TGFB1-mediated activation of SMAD2/3 by mediating the internalization of TGFBR1 from membrane rafts leading to its subsequent degradation. Binds 20(S)-hydroxycholesterol (20(S)-OHC). This chain is Caveolin-1 (CAV1), found in Chlorocebus aethiops (Green monkey).